The following is a 362-amino-acid chain: 3-dehydroquinate synthase (362 aa).

Residues 71 to 76, 105 to 109, 129 to 130, lysine 142, lysine 151, and 169 to 172 each bind NAD(+); these read DGEQYK, GVIGD, TT, and CLKT. The Zn(2+) site is built by glutamate 184, histidine 247, and histidine 264.

It belongs to the sugar phosphate cyclases superfamily. Dehydroquinate synthase family. Requires NAD(+) as cofactor. Co(2+) is required as a cofactor. It depends on Zn(2+) as a cofactor.

The protein localises to the cytoplasm. It carries out the reaction 7-phospho-2-dehydro-3-deoxy-D-arabino-heptonate = 3-dehydroquinate + phosphate. It functions in the pathway metabolic intermediate biosynthesis; chorismate biosynthesis; chorismate from D-erythrose 4-phosphate and phosphoenolpyruvate: step 2/7. Its function is as follows. Catalyzes the conversion of 3-deoxy-D-arabino-heptulosonate 7-phosphate (DAHP) to dehydroquinate (DHQ). This chain is 3-dehydroquinate synthase, found in Salmonella typhi.